The sequence spans 252 residues: Receptor expression-enhancing protein 3-B (252 aa).

The next 3 membrane-spanning stretches (helical) occupy residues 1–21 (MVSGMICKAVVLVFGILYPAY), 35–55 (YVRWMMYWIVFALYTVTETIA), and 57–77 (LTVSWFPLYFELKIAFVVWLL). A disordered region spans residues 163–225 (ETAETRFFPD…GLRRSQSMRS (63 aa)). Residues 198–211 (RTDEDVEVNSEDEV) are compositionally biased toward acidic residues.

It belongs to the DP1 family.

It localises to the endoplasmic reticulum membrane. Microtubule-binding protein required to ensure proper cell division and nuclear envelope reassembly by sequestering the endoplasmic reticulum away from chromosomes during mitosis. Probably acts by clearing the endoplasmic reticulum membrane from metaphase chromosomes. The protein is Receptor expression-enhancing protein 3-B (reep3-b) of Xenopus laevis (African clawed frog).